A 217-amino-acid chain; its full sequence is Cysteine-rich protein 3 (217 aa).

An LIM zinc-binding 1 domain is found at 3–64 (WTCPRCQQPV…KPCYGALFGP (62 aa)). Residues 84-112 (PGCTTPLSPSSFSPPRPRTGLPQGKKSPP) form a disordered region. The LIM zinc-binding 2 domain maps to 122-183 (SLCPGCGEPV…VPCYGYLFGP (62 aa)).

As to expression, expressed in most tissues, but not in skeletal muscle.

Its subcellular location is the cytoplasm. The sequence is that of Cysteine-rich protein 3 (CRIP3) from Homo sapiens (Human).